A 212-amino-acid polypeptide reads, in one-letter code: Probable octanoyltransferase (212 aa).

The 172-residue stretch at 28-199 (GVSEEMILVT…NLETLLQRQE (172 aa)) folds into the BPL/LPL catalytic domain. Substrate contacts are provided by residues 66-73 (RGGDATYH), 130-132 (SVG), and 143-145 (GVA). C161 functions as the Acyl-thioester intermediate in the catalytic mechanism.

It belongs to the LipB family.

The protein resides in the cytoplasm. It catalyses the reaction octanoyl-[ACP] + L-lysyl-[protein] = N(6)-octanoyl-L-lysyl-[protein] + holo-[ACP] + H(+). It functions in the pathway protein modification; protein lipoylation via endogenous pathway; protein N(6)-(lipoyl)lysine from octanoyl-[acyl-carrier-protein]: step 1/2. Its function is as follows. Catalyzes the transfer of endogenously produced octanoic acid from octanoyl-acyl-carrier-protein onto the lipoyl domains of lipoate-dependent enzymes. Lipoyl-ACP can also act as a substrate although octanoyl-ACP is likely to be the physiological substrate. This chain is Probable octanoyltransferase, found in Pyrobaculum arsenaticum (strain DSM 13514 / JCM 11321 / PZ6).